We begin with the raw amino-acid sequence, 341 residues long: Anthranilate phosphoribosyltransferase (341 aa).

Residues Gly79, 82–83, Thr87, 89–92, 107–115, and Ala119 each bind 5-phospho-alpha-D-ribose 1-diphosphate; these read GD, NIST, and KHGNRAASS. An anthranilate-binding site is contributed by Gly79. Residue Ser91 participates in Mg(2+) binding. Residue Asn110 coordinates anthranilate. Residue Arg165 coordinates anthranilate. 2 residues coordinate Mg(2+): Asp224 and Glu225.

It belongs to the anthranilate phosphoribosyltransferase family. As to quaternary structure, homodimer. Requires Mg(2+) as cofactor.

The enzyme catalyses N-(5-phospho-beta-D-ribosyl)anthranilate + diphosphate = 5-phospho-alpha-D-ribose 1-diphosphate + anthranilate. It participates in amino-acid biosynthesis; L-tryptophan biosynthesis; L-tryptophan from chorismate: step 2/5. Its function is as follows. Catalyzes the transfer of the phosphoribosyl group of 5-phosphorylribose-1-pyrophosphate (PRPP) to anthranilate to yield N-(5'-phosphoribosyl)-anthranilate (PRA). This Lacticaseibacillus paracasei (strain ATCC 334 / BCRC 17002 / CCUG 31169 / CIP 107868 / KCTC 3260 / NRRL B-441) (Lactobacillus paracasei) protein is Anthranilate phosphoribosyltransferase.